The primary structure comprises 322 residues: MDPTISSHDTESTPLNETGHPNCTPILTLSFLVLITTLVGLAGNTIVLWLLGFRMRRKAISVYILNLALADSFFLCCHFIDSLLRIIDFYGLYAHKLSKDILGNAAIIPYISGLSILSAISTERCLCVLWPIWYHCHRPRNMSAIICALIWVLSFLMGILDWFSGFLGETHHHLWKNVDFIITAFLIFLFMLLSGSSLALLLRILCGPRRKPLSRLYVTIALTVMVYLICGLPLGLYLFLLYWFGVHLHYPFCHIYQVTAVLSCVNSSANPIIYFLVGSFRQHRKHRSLKRVLKRALEDTPEEDEYTDSHLHKTTEISESRY.

Topologically, residues 1–30 are extracellular; it reads MDPTISSHDTESTPLNETGHPNCTPILTLS. N-linked (GlcNAc...) asparagine glycosylation is present at asparagine 16. The helical transmembrane segment at 31-51 threads the bilayer; the sequence is FLVLITTLVGLAGNTIVLWLL. Over 52 to 59 the chain is Cytoplasmic; the sequence is GFRMRRKA. A helical membrane pass occupies residues 60 to 80; sequence ISVYILNLALADSFFLCCHFI. Topologically, residues 81–100 are extracellular; that stretch reads DSLLRIIDFYGLYAHKLSKD. Residues 101-121 form a helical membrane-spanning segment; the sequence is ILGNAAIIPYISGLSILSAIS. Over 122–142 the chain is Cytoplasmic; that stretch reads TERCLCVLWPIWYHCHRPRNM. The helical transmembrane segment at 143–163 threads the bilayer; that stretch reads SAIICALIWVLSFLMGILDWF. Residues 164–179 are Extracellular-facing; the sequence is SGFLGETHHHLWKNVD. The chain crosses the membrane as a helical span at residues 180–200; it reads FIITAFLIFLFMLLSGSSLAL. Residues 201-223 lie on the Cytoplasmic side of the membrane; that stretch reads LLRILCGPRRKPLSRLYVTIALT. The chain crosses the membrane as a helical span at residues 224-244; the sequence is VMVYLICGLPLGLYLFLLYWF. The Extracellular portion of the chain corresponds to 245 to 257; it reads GVHLHYPFCHIYQ. Residues 258–278 form a helical membrane-spanning segment; sequence VTAVLSCVNSSANPIIYFLVG. At 279–322 the chain is on the cytoplasmic side; the sequence is SFRQHRKHRSLKRVLKRALEDTPEEDEYTDSHLHKTTEISESRY.

It belongs to the G-protein coupled receptor 1 family. Mas subfamily. As to expression, expressed in a subset of IB4-positive small diameter nociceptive dorsal root neurons.

The protein localises to the cell membrane. Its function is as follows. Orphan receptor activated by neuropeptides terminating in Arg-Phe or Arg-Phe-amide. Mediates its action by association with G proteins that activate a phosphatidylinositol-calcium second messenger system. Its effect is mediated by G(q) and G(11) proteins. May regulate the function of nociceptive neurons by modulation of pain perception. The protein is Mas-related G-protein coupled receptor member X1 of Mus musculus (Mouse).